Reading from the N-terminus, the 53-residue chain is Insulin (53 aa).

The propeptide at 1 to 30 (DVEPLLGFLSPKSGQENEVDDFPYKGQGEL) is c peptide. C38 and C43 form a disulfide bridge.

Belongs to the insulin family. In terms of assembly, heterodimer of a B chain and an A chain linked by two disulfide bonds.

The protein localises to the secreted. Functionally, insulin decreases blood glucose concentration. It increases cell permeability to monosaccharides, amino acids and fatty acids. It accelerates glycolysis, the pentose phosphate cycle, and glycogen synthesis in liver. The chain is Insulin (ins) from Anguilla anguilla (European freshwater eel).